A 146-amino-acid chain; its full sequence is Large ribosomal subunit protein uL15 (146 aa).

The interval 1 to 39 (MTLKLHNLRPAPGAKTAKTRVGRGEGSKGKTAGRGTKGT) is disordered.

The protein belongs to the universal ribosomal protein uL15 family. As to quaternary structure, part of the 50S ribosomal subunit.

Functionally, binds to the 23S rRNA. The sequence is that of Large ribosomal subunit protein uL15 from Nocardioides sp. (strain ATCC BAA-499 / JS614).